Here is a 564-residue protein sequence, read N- to C-terminus: Multidrug resistance protein 1 (564 aa).

Residues 1–115 (MHYRFLRDSF…NPQNWPTLQK (115 aa)) lie on the Cytoplasmic side of the membrane. The segment at 60-101 (IDNQGEPNSSQSSSSNNTIVDNNNNNDNDVDGDKIVVTWDGD) is disordered. The span at 67–86 (NSSQSSSSNNTIVDNNNNND) shows a compositional bias: low complexity. Residues 116-136 (AFFIFQISFLTTSVYMGSAVY) traverse the membrane as a helical segment. Residues 137–151 (TPGIEELMHDFGIGR) are Extracellular-facing. Residues 152–172 (VVATLPLTLFVIGYGVGPLVF) traverse the membrane as a helical segment. Residues 173–183 (SPMSENAIFGR) are Cytoplasmic-facing. The helical transmembrane segment at 184–204 (TSIYIITLFLFVILQIPTALV) threads the bilayer. Residues 205 to 206 (NN) are Extracellular-facing. A helical membrane pass occupies residues 207-227 (IAGLCILRFLGGFFASPCLAT). The Cytoplasmic portion of the chain corresponds to 228 to 242 (GGASVADVVKFWNLP). Residues 243 to 263 (VGLAAWSLGAVCGPSFGPFFG) form a helical membrane-spanning segment. Residues 264-273 (SILTVKASWR) are Extracellular-facing. Residues 274 to 294 (WTFWFMCIISGFSFVMLCFTL) form a helical membrane-spanning segment. Residues 295-350 (PETFGKTLLYRKAKRLRAITGNDRITSEGEVENSKMTSHELIIDTLWRPLEITVME) lie on the Cytoplasmic side of the membrane. The helical transmembrane segment at 351-371 (PVVLLINIYIAMVYSILYLFF) threads the bilayer. Over 372 to 390 (EVFPIYFVGVKHFTLVELG) the chain is Extracellular. Residues 391 to 411 (TTYMSIVIGIVIAAFIYIPVI) form a helical membrane-spanning segment. Residues 412–428 (RQKFTKPILRQEQVFPE) lie on the Cytoplasmic side of the membrane. A helical membrane pass occupies residues 429-449 (VFIPIAIVGGILLTSGLFIFG). The Extracellular segment spans residues 450–455 (WSANRT). Asparagine 453 is a glycosylation site (N-linked (GlcNAc...) asparagine). The chain crosses the membrane as a helical span at residues 456-476 (THWVGPLFGAATTASGAFLIF). Topologically, residues 477–503 (QTLFNFMGASFKPHYIASVFASNDLFR) are cytoplasmic. The helical transmembrane segment at 504 to 524 (SVIASVFPLFGAPLFDNLATP) threads the bilayer. At 525–528 (EYPV) the chain is on the extracellular side. The chain crosses the membrane as a helical span at residues 529–549 (AWGSSVLGFITLVMIAIPVLF). Residues 550–564 (YLNGPKLRARSKYAN) lie on the Cytoplasmic side of the membrane.

It belongs to the major facilitator superfamily. CAR1 family.

The protein localises to the cell membrane. In terms of biological role, plasma membrane multidrug efflux pump that confers resistance to numerous chemicals including azoles such as fluconazole, voriconazole, and benztriazoles, as well as to benomyl, cycloheximide, methotrexate, 4-nitroquinoline-N-oxide, sulfometuron methyl, cerulenin, and brefeldin A. In Candida albicans (strain SC5314 / ATCC MYA-2876) (Yeast), this protein is Multidrug resistance protein 1.